The sequence spans 380 residues: Omega-3 fatty acid desaturase, endoplasmic reticulum (380 aa).

A helical membrane pass occupies residues 59 to 78 (VLVVTALAASAISFNSWFFW). The short motif at 97–101 (HDCGH) is the Histidine box-1 element. The Histidine box-2 signature appears at 133 to 137 (HRTHH). The next 2 helical transmembrane spans lie at 208-231 (GVVT…LTIG) and 238-256 (LYGV…VTYL). The short motif at 300-304 (HVIHH) is the Histidine box-3 element.

This sequence belongs to the fatty acid desaturase type 1 family.

The protein localises to the endoplasmic reticulum membrane. The protein operates within lipid metabolism; polyunsaturated fatty acid biosynthesis. Functionally, microsomal (ER) omega-3 fatty acid desaturase introduces the third double bond in the biosynthesis of 18:3 fatty acids, important constituents of plant membranes. It is thought to use cytochrome b5 as an electron donor and to act on fatty acids esterified to phosphatidylcholine and, possibly, other phospholipids. The sequence is that of Omega-3 fatty acid desaturase, endoplasmic reticulum (ARG1) from Vigna radiata var. radiata (Mung bean).